Consider the following 1761-residue polypeptide: Probable serine/threonine-protein kinase DDB_G0282963 (1761 aa).

Disordered regions lie at residues 18–47 (PQQQQIPQQQEQQQQQQQQQQQQQQQQQQQ), 60–269 (QQQQ…SNKL), 322–458 (SISN…SDFN), 545–717 (QNSS…KSSQ), 749–783 (LKNSPFPPSSPILSPQTDDPNNNNNNNNSNTTISQ), 798–830 (AFYNSGSNNNNNNNNNNNNNNNNNNNNTNSTSA), 842–956 (TTQI…KSVF), 972–997 (NSHHHHNSGNNSSNSNNNNNDDEVPT), 1081–1151 (ITSA…CNVN), 1179–1305 (KNNC…PSKQ), 1318–1343 (ALDSTNNNNNNNNDTDSTSSNMGTPT), and 1355–1459 (QHSR…ECWK). 4 stretches are compositionally biased toward low complexity: residues 19–47 (QQQQIPQQQEQQQQQQQQQQQQQQQQQQQ), 60–85 (QQQQEQQNNNNNINDNINGNNNSNEI), 92–105 (NITNNNGTSIIISL), and 112–237 (ALNS…NNNN). Residues 238–256 (KQMTPPTFKNNLQVKHQPQ) show a composition bias toward polar residues. Composition is skewed to low complexity over residues 257–269 (SSSGGSIGGSNKL), 322–341 (SISNTTNETTTTTTTTTNTT), 348–451 (GSIG…NNGV), and 546–572 (NSSLNINNNNNSSNNNNINNNNNNNNI). Over residues 573-582 (MAGSTSSVIY) the composition is skewed to polar residues. The segment covering 591–627 (NENNNNNINNDNTVCNINNNNNSNNNKSNNSNNSNNS) has biased composition (low complexity). The segment covering 633-643 (SSDEEPETDSD) has biased composition (acidic residues). Low complexity-rich tracts occupy residues 674 to 697 (NNTNTNTNTHNTYNNNKNNNNNNT), 759 to 778 (PILSPQTDDPNNNNNNNNSN), 805 to 824 (NNNNNNNNNNNNNNNNNNNN), 847 to 885 (TSDIDTSNSDNNNNNNNNNTSDNNFNDYNNDYNNDYNNY), 902 to 956 (TKMS…KSVF), 979 to 990 (SGNNSSNSNNNN), 1081 to 1149 (ITSA…CTCN), and 1180 to 1262 (NNCT…SNNN). Basic residues predominate over residues 1263–1273 (NHHHHHHHHHN). 4 stretches are compositionally biased toward low complexity: residues 1288 to 1303 (SSSSSPWSSPALSSPS), 1320 to 1338 (DSTNNNNNNNNDTDSTSSN), 1359 to 1386 (NNSSNNQNNNNINNNNNNNNNNNNNNNN), and 1393 to 1454 (SNST…MNSN). Positions 1476 to 1744 (LFLIKKIGAG…AITSLYDDYI (269 aa)) constitute a Protein kinase domain. ATP-binding positions include 1482 to 1490 (IGAGSFSKV) and Lys-1503. Residue Asp-1597 is the Proton acceptor of the active site.

It belongs to the protein kinase superfamily. TKL Ser/Thr protein kinase family.

The enzyme catalyses L-seryl-[protein] + ATP = O-phospho-L-seryl-[protein] + ADP + H(+). It carries out the reaction L-threonyl-[protein] + ATP = O-phospho-L-threonyl-[protein] + ADP + H(+). The chain is Probable serine/threonine-protein kinase DDB_G0282963 from Dictyostelium discoideum (Social amoeba).